Consider the following 178-residue polypeptide: Ribosome maturation factor RimM (178 aa).

Residues 98–178 enclose the PRC barrel domain; sequence DGEYYWNQLE…RILVDWDPEF (81 aa).

This sequence belongs to the RimM family. In terms of assembly, binds ribosomal protein uS19.

It is found in the cytoplasm. An accessory protein needed during the final step in the assembly of 30S ribosomal subunit, possibly for assembly of the head region. Essential for efficient processing of 16S rRNA. May be needed both before and after RbfA during the maturation of 16S rRNA. It has affinity for free ribosomal 30S subunits but not for 70S ribosomes. The chain is Ribosome maturation factor RimM from Cellvibrio japonicus (strain Ueda107) (Pseudomonas fluorescens subsp. cellulosa).